Reading from the N-terminus, the 469-residue chain is 3-isopropylmalate dehydratase large subunit (469 aa).

The [4Fe-4S] cluster site is built by Cys-347, Cys-408, and Cys-411.

Belongs to the aconitase/IPM isomerase family. LeuC type 1 subfamily. Heterodimer of LeuC and LeuD. [4Fe-4S] cluster serves as cofactor.

It catalyses the reaction (2R,3S)-3-isopropylmalate = (2S)-2-isopropylmalate. It functions in the pathway amino-acid biosynthesis; L-leucine biosynthesis; L-leucine from 3-methyl-2-oxobutanoate: step 2/4. Catalyzes the isomerization between 2-isopropylmalate and 3-isopropylmalate, via the formation of 2-isopropylmaleate. The protein is 3-isopropylmalate dehydratase large subunit of Haemophilus influenzae (strain PittEE).